Here is a 205-residue protein sequence, read N- to C-terminus: MVPLIDIAVESPRWTEAGNEGEDPLSLDALVEAAIGAAVARAGIALHAEAEVSLLFCDDAFIRGLNHQWRGLDKPTNVLSFPSDEDLEDARLLGDIIIAFETSAGEAKAEAKSLAAHVSHLVVHGFLHLIGYDHEEAEEAEEMERMEQVILADLGIADPYHGTAPVAPGGEAQVPNEALETSGKRQDHSLGEILPGGMSRRLAGS.

Zn(2+) contacts are provided by histidine 124, histidine 128, and histidine 134. The segment at 162-205 is disordered; sequence GTAPVAPGGEAQVPNEALETSGKRQDHSLGEILPGGMSRRLAGS.

It belongs to the endoribonuclease YbeY family. It depends on Zn(2+) as a cofactor.

It localises to the cytoplasm. Functionally, single strand-specific metallo-endoribonuclease involved in late-stage 70S ribosome quality control and in maturation of the 3' terminus of the 16S rRNA. The sequence is that of Endoribonuclease YbeY from Beijerinckia indica subsp. indica (strain ATCC 9039 / DSM 1715 / NCIMB 8712).